Consider the following 351-residue polypeptide: MTQDATPSRIPTLAVTLGDVAGIGPEITAKMLLGHDELRQRARLLVVGDAAVLAQAVQAVGGDPARVRVIATPAEATNQPGSIEVIQAGPSLAHVPPGQLSAEAGDGSVRYVTTACALARDGLIDGIVTAPLNKAAMHMAGHKWPGHTELLAHEFGVKTFSLVLSAGDLYIFHATTHVSLRQAIEDVNPQRMRAVLRLAGSFARALGRADHPVAVAGLNPHAGENGIFGTEDAEILAPAVAQANAEGILAAGPIPADALFPQAVRGKWKFVIACYHDQGHAPFKSVYGDDGVNITVGLPVVRVSVDHGTAFDIAGKGIAREDSLVLAAERAAQLAPGWHQVWETARSTTGG.

Substrate-binding residues include H147 and T148. Positions 177, 221, and 276 each coordinate a divalent metal cation. K284, N293, and R302 together coordinate substrate.

Belongs to the PdxA family. PdxA2 subfamily. As to quaternary structure, homodimer. A divalent metal cation is required as a cofactor.

The enzyme catalyses 4-O-phospho-D-threonate + NAD(+) = dihydroxyacetone phosphate + CO2 + NADH. Catalyzes the NAD-dependent oxidation and subsequent decarboxylation of D-threonate 4-phosphate to produce dihydroxyacetone phosphate (DHAP). Can also use 4-hydroxy-L-threonine 4-phosphate as substrate. The polypeptide is D-threonate 4-phosphate dehydrogenase (Bordetella bronchiseptica (strain ATCC BAA-588 / NCTC 13252 / RB50) (Alcaligenes bronchisepticus)).